The primary structure comprises 340 residues: NAD-dependent epimerase/dehydratase terH (340 aa).

A helical transmembrane segment spans residues isoleucine 7–isoleucine 27. Residue asparagine 139 is glycosylated (N-linked (GlcNAc...) asparagine). Residue tyrosine 176 participates in NADP(+) binding.

This sequence belongs to the NAD(P)-dependent epimerase/dehydratase family. Dihydroflavonol-4-reductase subfamily.

Its subcellular location is the membrane. NAD-dependent epimerase/dehydratase; part of the gene cluster that mediates the biosynthesis of terrein, a fungal metabolite with ecological, antimicrobial, antiproliferative, and antioxidative activities. The first step in the pathway is performed by the polyketide synthase terA that produces 4-hydroxy-6-methylpyranon (4-HMP), orsellinic acid (OA), and 2,3-dehydro-6-hydroxymellein (2,3-dehydro-6-HM) by condensing acetyl-CoA with two, three, or four malonyl-CoA units, respectively. 4-HMP and OA are not pathway intermediates, but are rather shunt or side products. 2,3-dehydro-6-HM is further converted to 6-hydroxymellein (6-HM) by the 6-hydroxymellein synthase terB. The monooxygenases terC and terD, the multicopper oxidase terE and the Kelch-like protein terF are then involved in the transformation of 6-HM to terrein. Even if they are co-regulated with the other terrein cluster genes, terH and terI seem to be dispensable for terrein production; whereas one or both of the 2 transporters terG and terJ are probably required for efficient secretion of metabolites. The sequence is that of NAD-dependent epimerase/dehydratase terH from Aspergillus terreus (strain NIH 2624 / FGSC A1156).